Here is a 323-residue protein sequence, read N- to C-terminus: tRNA U34 carboxymethyltransferase (323 aa).

Carboxy-S-adenosyl-L-methionine contacts are provided by residues K91, W105, K110, G130, 152 to 154 (DPT), 181 to 182 (IE), M196, Y200, and R315.

Belongs to the class I-like SAM-binding methyltransferase superfamily. CmoB family. Homotetramer.

It carries out the reaction carboxy-S-adenosyl-L-methionine + 5-hydroxyuridine(34) in tRNA = 5-carboxymethoxyuridine(34) in tRNA + S-adenosyl-L-homocysteine + H(+). Functionally, catalyzes carboxymethyl transfer from carboxy-S-adenosyl-L-methionine (Cx-SAM) to 5-hydroxyuridine (ho5U) to form 5-carboxymethoxyuridine (cmo5U) at position 34 in tRNAs. In Escherichia fergusonii (strain ATCC 35469 / DSM 13698 / CCUG 18766 / IAM 14443 / JCM 21226 / LMG 7866 / NBRC 102419 / NCTC 12128 / CDC 0568-73), this protein is tRNA U34 carboxymethyltransferase.